A 735-amino-acid polypeptide reads, in one-letter code: Rho GTPase-activating protein SYDE1 (735 aa).

3 disordered regions span residues 1–253, 601–655, and 669–706; these read MAEP…PYEV, PDTR…AGDW, and FLSG…FDAP. The segment covering 14 to 47 has biased composition (basic and acidic residues); the sequence is RGREKLPRKKSDAKDRGRPAQRSEPKPPEPEPRV. Positions 151–160 are enriched in low complexity; it reads PTKTSRTKSP. Phosphoserine occurs at positions 224, 231, 235, and 244. The C2 domain maps to 249-366; it reads RPYEVGPSAR…FRGCQAQQLA (118 aa). Residues 398 to 604 form the Rho-GAP domain; it reads LPLQLLVERE…YLLQSWPDTR (207 aa). Over residues 669-679 the composition is skewed to basic and acidic residues; the sequence is FLSGPDYDHVT. 2 positions are modified to phosphoserine: Ser681 and Ser683.

Post-translationally, palmitoylated. Probably palmitoylated by ZDHHC3 and ZDHHC7.

Functionally, GTPase activator for the Rho-type GTPases. As a GCM1 downstream effector, it is involved in placental development and positively regulates trophoblast cells migration. It regulates cytoskeletal remodeling by controlling the activity of Rho GTPases including RHOA, CDC42 and RAC1. The protein is Rho GTPase-activating protein SYDE1 (Syde1) of Rattus norvegicus (Rat).